Reading from the N-terminus, the 77-residue chain is Sec-independent protein translocase protein TatA (77 aa).

A helical transmembrane segment spans residues 2-22 (GFGGISIWQLLIILLIVVMLF). Composition is skewed to basic and acidic residues over residues 46–59 (DNGE…EEPK) and 66–77 (QARKVEEPAKKD). Positions 46-77 (DNGEAEKPAVEEPKGQTIDAQARKVEEPAKKD) are disordered.

Belongs to the TatA/E family. As to quaternary structure, the Tat system comprises two distinct complexes: a TatABC complex, containing multiple copies of TatA, TatB and TatC subunits, and a separate TatA complex, containing only TatA subunits. Substrates initially bind to the TatABC complex, which probably triggers association of the separate TatA complex to form the active translocon.

It localises to the cell inner membrane. Part of the twin-arginine translocation (Tat) system that transports large folded proteins containing a characteristic twin-arginine motif in their signal peptide across membranes. TatA could form the protein-conducting channel of the Tat system. In Ectopseudomonas mendocina (strain ymp) (Pseudomonas mendocina), this protein is Sec-independent protein translocase protein TatA.